A 369-amino-acid chain; its full sequence is Nudix hydrolase 8 (369 aa).

The 131-residue stretch at 188–318 (SHQVGVGGFV…GDKMFKRVIE (131 aa)) folds into the Nudix hydrolase domain. The short motif at 225-246 (GFINESEEIFSGAVREVKEETG) is the Nudix box element. Mg(2+) is bound by residues Glu-240 and Glu-244.

The protein belongs to the Nudix hydrolase family. Mg(2+) serves as cofactor. Mn(2+) is required as a cofactor. Expressed in roots, stems and, at lower level, leaves.

Probably mediates the hydrolysis of some nucleoside diphosphate derivatives. May be involved in plant immunity and act as a positive regulator of defense response through salicylic acid (SA) signaling. This Arabidopsis thaliana (Mouse-ear cress) protein is Nudix hydrolase 8 (NUDT8).